The chain runs to 752 residues: Photosystem I P700 chlorophyll a apoprotein A1 (752 aa).

Helical transmembrane passes span 73 to 96 (IFAA…FHGA), 159 to 182 (LYCT…FHYH), 198 to 222 (LNHH…HVSA), 294 to 312 (IAHH…GHQY), 349 to 372 (WHAQ…HHMY), 388 to 414 (LCIF…IFMV), 436 to 458 (AIIS…LYIH), and 533 to 551 (FLIH…LILL). 2 residues coordinate [4Fe-4S] cluster: Cys-575 and Cys-584. The next 2 helical transmembrane spans lie at 591-612 (HVFL…HFSW) and 666-688 (LSAY…MFLF). Residue His-677 coordinates chlorophyll a'. The chlorophyll a site is built by Met-685 and Tyr-693. Trp-694 contributes to the phylloquinone binding site. Residues 726 to 746 (AVGVAHYLLGGIATTWAFFHA) form a helical membrane-spanning segment.

This sequence belongs to the PsaA/PsaB family. In terms of assembly, the PsaA/B heterodimer binds the P700 chlorophyll special pair and subsequent electron acceptors. PSI consists of a core antenna complex that captures photons, and an electron transfer chain that converts photonic excitation into a charge separation. The cyanobacterial PSI reaction center is composed of one copy each of PsaA,B,C,D,E,F,I,J,K,L,M and X, and forms trimeric complexes. It depends on PSI electron transfer chain: 5 chlorophyll a, 1 chlorophyll a', 2 phylloquinones and 3 4Fe-4S clusters. PSI core antenna: 90 chlorophyll a, 22 carotenoids, 3 phospholipids and 1 galactolipid. P700 is a chlorophyll a/chlorophyll a' dimer, A0 is one or more chlorophyll a, A1 is one or both phylloquinones and FX is a shared 4Fe-4S iron-sulfur center. as a cofactor.

It is found in the cellular thylakoid membrane. It carries out the reaction reduced [plastocyanin] + hnu + oxidized [2Fe-2S]-[ferredoxin] = oxidized [plastocyanin] + reduced [2Fe-2S]-[ferredoxin]. Functionally, psaA and PsaB bind P700, the primary electron donor of photosystem I (PSI), as well as the electron acceptors A0, A1 and FX. PSI is a plastocyanin/cytochrome c6-ferredoxin oxidoreductase, converting photonic excitation into a charge separation, which transfers an electron from the donor P700 chlorophyll pair to the spectroscopically characterized acceptors A0, A1, FX, FA and FB in turn. Oxidized P700 is reduced on the lumenal side of the thylakoid membrane by plastocyanin or cytochrome c6. The sequence is that of Photosystem I P700 chlorophyll a apoprotein A1 from Nostoc sp. (strain PCC 7120 / SAG 25.82 / UTEX 2576).